The following is a 431-amino-acid chain: Fumarylacetoacetase (431 aa).

Residue aspartate 133 participates in Ca(2+) binding. Residue tyrosine 135 coordinates substrate. Histidine 140 serves as the catalytic Proton acceptor. Residue arginine 149 coordinates substrate. Residues glutamate 209, glutamate 211, and aspartate 243 each contribute to the Ca(2+) site. Aspartate 243 serves as a coordination point for Mg(2+). Substrate is bound by residues glutamine 250 and tyrosine 254. The Mg(2+) site is built by lysine 263 and threonine 267. Residue threonine 362 participates in substrate binding.

The protein belongs to the FAH family. Ca(2+) serves as cofactor. It depends on Mg(2+) as a cofactor.

It catalyses the reaction 4-fumarylacetoacetate + H2O = acetoacetate + fumarate + H(+). It participates in amino-acid degradation; L-phenylalanine degradation; acetoacetate and fumarate from L-phenylalanine: step 6/6. In terms of biological role, use of phenylalanine and phenylacetate as a carbon source. This chain is Fumarylacetoacetase (fahA), found in Emericella nidulans (strain FGSC A4 / ATCC 38163 / CBS 112.46 / NRRL 194 / M139) (Aspergillus nidulans).